Reading from the N-terminus, the 263-residue chain is Proteasome subunit alpha type-1 (263 aa).

At methionine 1 the chain carries N-acetylmethionine. The residue at position 110 (serine 110) is a Phosphoserine; alternate. Residue serine 110 is glycosylated (O-linked (GlcNAc) serine; alternate). Residue lysine 115 forms a Glycyl lysine isopeptide (Lys-Gly) (interchain with G-Cter in ubiquitin) linkage. Serine 177 is subject to Phosphoserine. Residue lysine 208 forms a Glycyl lysine isopeptide (Lys-Gly) (interchain with G-Cter in ubiquitin) linkage. The interval 232–263 is disordered; it reads FLEGLEERPQRKAQPAQPADEPAEKADEPMEH. Residues 253 to 263 show a composition bias toward basic and acidic residues; sequence PAEKADEPMEH.

This sequence belongs to the peptidase T1A family. In terms of assembly, the 26S proteasome consists of a 20S proteasome core and two 19S regulatory subunits. The 20S proteasome core is a barrel-shaped complex made of 28 subunits that are arranged in four stacked rings. The two outer rings are each formed by seven alpha subunits, and the two inner rings are formed by seven beta subunits. The proteolytic activity is exerted by three beta-subunits PSMB5, PSMB6 and PSMB7. Interacts with NOTCH3. Interacts with ZFAND1.

The protein resides in the cytoplasm. The protein localises to the nucleus. Component of the 20S core proteasome complex involved in the proteolytic degradation of most intracellular proteins. This complex plays numerous essential roles within the cell by associating with different regulatory particles. Associated with two 19S regulatory particles, forms the 26S proteasome and thus participates in the ATP-dependent degradation of ubiquitinated proteins. The 26S proteasome plays a key role in the maintenance of protein homeostasis by removing misfolded or damaged proteins that could impair cellular functions, and by removing proteins whose functions are no longer required. Associated with the PA200 or PA28, the 20S proteasome mediates ubiquitin-independent protein degradation. This type of proteolysis is required in several pathways including spermatogenesis (20S-PA200 complex) or generation of a subset of MHC class I-presented antigenic peptides (20S-PA28 complex). The chain is Proteasome subunit alpha type-1 from Homo sapiens (Human).